The sequence spans 464 residues: Siroheme synthase (464 aa).

The segment at 1–203 (MEFLPLFHNL…GQGAEAERLL (203 aa)) is precorrin-2 dehydrogenase /sirohydrochlorin ferrochelatase. Residues 22–23 (EI) and 43–44 (PE) contribute to the NAD(+) site. Ser-128 is modified (phosphoserine). Residues 216–464 (GEVYLVGAGP…AWFEGAQATL (249 aa)) are uroporphyrinogen-III C-methyltransferase. Pro-225 lines the S-adenosyl-L-methionine pocket. Asp-248 serves as the catalytic Proton acceptor. Lys-270 serves as the catalytic Proton donor. S-adenosyl-L-methionine is bound by residues 301–303 (GGD), Ile-306, 331–332 (TA), Met-383, and Gly-412.

This sequence in the N-terminal section; belongs to the precorrin-2 dehydrogenase / sirohydrochlorin ferrochelatase family. The protein in the C-terminal section; belongs to the precorrin methyltransferase family.

The enzyme catalyses uroporphyrinogen III + 2 S-adenosyl-L-methionine = precorrin-2 + 2 S-adenosyl-L-homocysteine + H(+). The catalysed reaction is precorrin-2 + NAD(+) = sirohydrochlorin + NADH + 2 H(+). It catalyses the reaction siroheme + 2 H(+) = sirohydrochlorin + Fe(2+). It participates in cofactor biosynthesis; adenosylcobalamin biosynthesis; precorrin-2 from uroporphyrinogen III: step 1/1. The protein operates within cofactor biosynthesis; adenosylcobalamin biosynthesis; sirohydrochlorin from precorrin-2: step 1/1. Its pathway is porphyrin-containing compound metabolism; siroheme biosynthesis; precorrin-2 from uroporphyrinogen III: step 1/1. It functions in the pathway porphyrin-containing compound metabolism; siroheme biosynthesis; siroheme from sirohydrochlorin: step 1/1. It participates in porphyrin-containing compound metabolism; siroheme biosynthesis; sirohydrochlorin from precorrin-2: step 1/1. Functionally, multifunctional enzyme that catalyzes the SAM-dependent methylations of uroporphyrinogen III at position C-2 and C-7 to form precorrin-2 via precorrin-1. Then it catalyzes the NAD-dependent ring dehydrogenation of precorrin-2 to yield sirohydrochlorin. Finally, it catalyzes the ferrochelation of sirohydrochlorin to yield siroheme. The chain is Siroheme synthase from Pseudomonas syringae pv. tomato (strain ATCC BAA-871 / DC3000).